A 239-amino-acid chain; its full sequence is MVIKAQSPAGFAEEYIIESIWNNRFPPGSILPAERELSELIGVTRTTLREVLQRLARDGWLTIQHGKPTKVNNFWETSGLNILETLARLDHESVPQLIDNLLSVRTNIATIFIRTALRMHPERAREVLATADEVEDHADAFAELDYNIFRGLAFASGNPIYGLILNGMKGLYTRIGRHYFSNPEARSLALGFYHKLGTLSREGLHDQVYDVVRTYGRESGEIWHRMQKNLPGDLAMHSR.

The HTH gntR-type domain maps to 6 to 74 (QSPAGFAEEY…HGKPTKVNNF (69 aa)). Positions 34–53 (ERELSELIGVTRTTLREVLQ) form a DNA-binding region, H-T-H motif.

In terms of assembly, homodimer.

The protein localises to the cytoplasm. Functionally, multifunctional regulator of fatty acid metabolism. This is Fatty acid metabolism regulator protein from Cronobacter sakazakii (strain ATCC BAA-894) (Enterobacter sakazakii).